Here is a 225-residue protein sequence, read N- to C-terminus: uncharacterized protein (225 aa).

This is an uncharacterized protein from Dictyostelium discoideum (Social amoeba).